Reading from the N-terminus, the 480-residue chain is Histone deacetylase 1 (480 aa).

A histone deacetylase region spans residues 9–321 (RKVCYYYDGD…WTYETAVALD (313 aa)). 1D-myo-inositol 1,4,5,6-tetrakisphosphate is bound by residues Gly-27 and Lys-31. The active site involves His-141. 3 residues coordinate Zn(2+): Asp-176, His-178, and Asp-264. Arg-270 is a 1D-myo-inositol 1,4,5,6-tetrakisphosphate binding site. The tract at residues 376-480 (APGVQMQPIP…KGVKEETKST (105 aa)) is disordered. Positions 388–400 (AVQEDSGDEEEED) are enriched in acidic residues. Residues 401 to 416 (PEKRISIRNSDKRISC) are compositionally biased toward basic and acidic residues. Over residues 417 to 427 (DEEFSDSEDEG) the composition is skewed to acidic residues. The span at 455-480 (KDEKEEEKAKEEKAEPKGVKEETKST) shows a compositional bias: basic and acidic residues.

The protein belongs to the histone deacetylase family. HD type 1 subfamily. Requires Zn(2+) as cofactor.

It is found in the nucleus. The enzyme catalyses N(6)-acetyl-L-lysyl-[histone] + H2O = L-lysyl-[histone] + acetate. It catalyses the reaction N(6)-acetyl-L-lysyl-[protein] + H2O = L-lysyl-[protein] + acetate. The catalysed reaction is N(6)-(2E)-butenoyl-L-lysyl-[protein] + H2O = (2E)-2-butenoate + L-lysyl-[protein]. It carries out the reaction N(6)-[(S)-lactoyl]-L-lysyl-[protein] + H2O = (S)-lactate + L-lysyl-[protein]. Its activity is regulated as follows. Inositol tetraphosphate (1D-myo-inositol 1,4,5,6-tetrakisphosphate) may act as an intermolecular glue between HDAC1 and N-Cor repressor complex components. Its function is as follows. Histone deacetylase that catalyzes the deacetylation of lysine residues on the N-terminal part of the core histones (H2A, H2B, H3 and H4). Histone deacetylation gives a tag for epigenetic repression and plays an important role in transcriptional regulation, cell cycle progression and developmental events. Histone deacetylases act via the formation of large multiprotein complexes. Also functions as a deacetylase for non-histone proteins. In addition to protein deacetylase activity, also has protein-lysine deacylase activity: acts as a protein decrotonylase and delactylase by mediating decrotonylation ((2E)-butenoyl) and delactylation (lactoyl) of histones, respectively. The protein is Histone deacetylase 1 (HDAC1) of Gallus gallus (Chicken).